The primary structure comprises 92 residues: Small ribosomal subunit protein bS20 (92 aa).

The interval 1-23 (MANSPSAKKRAKQAEKRRSHNAS) is disordered. Residues 7 to 20 (AKKRAKQAEKRRSH) are compositionally biased toward basic residues.

Belongs to the bacterial ribosomal protein bS20 family.

In terms of biological role, binds directly to 16S ribosomal RNA. The chain is Small ribosomal subunit protein bS20 from Ectopseudomonas mendocina (strain ymp) (Pseudomonas mendocina).